The chain runs to 104 residues: Salivary protein FS145 (104 aa).

An N-terminal signal peptide occupies residues 1–18 (MKLFAVFLLFCLVNQIYC). 4 cysteine pairs are disulfide-bonded: Cys32/Cys80, Cys62/Cys89, Cys72/Cys100, and Cys76/Cys102. Residues 92 to 94 (WGD) carry the Putative integrin attachment site; atypical (WGD) motif.

As to quaternary structure, interacts with host integrin alpha-V/beta-3 (ITGAV:ITGB3).

The protein resides in the secreted. In terms of biological role, inhibits proliferation, adhesion and migration of host cells as well as host angiogenesis by blocking host integrin alpha-V/beta-3 (ITGAV:ITGB3). The polypeptide is Salivary protein FS145 (Xenopsylla cheopis (Oriental rat flea)).